Consider the following 122-residue polypeptide: Large ribosomal subunit protein uL14 (122 aa).

Belongs to the universal ribosomal protein uL14 family. In terms of assembly, part of the 50S ribosomal subunit. Forms a cluster with proteins L3 and L19. In the 70S ribosome, L14 and L19 interact and together make contacts with the 16S rRNA in bridges B5 and B8.

In terms of biological role, binds to 23S rRNA. Forms part of two intersubunit bridges in the 70S ribosome. The protein is Large ribosomal subunit protein uL14 of Leptothrix cholodnii (strain ATCC 51168 / LMG 8142 / SP-6) (Leptothrix discophora (strain SP-6)).